Here is a 487-residue protein sequence, read N- to C-terminus: Steroid 21-hydroxylase (487 aa).

Heme b is bound by residues Arg-92 and Lys-117. Residue Arg-228 coordinates 17alpha-hydroxyprogesterone. A progesterone-binding site is contributed by Arg-228. Residues His-357, Arg-418, and Cys-420 each contribute to the heme b site.

This sequence belongs to the cytochrome P450 family. Heme b is required as a cofactor.

The protein resides in the endoplasmic reticulum membrane. It localises to the microsome membrane. The catalysed reaction is progesterone + reduced [NADPH--hemoprotein reductase] + O2 = 21-hydroxyprogesterone + oxidized [NADPH--hemoprotein reductase] + H2O + H(+). It carries out the reaction 17alpha-hydroxyprogesterone + reduced [NADPH--hemoprotein reductase] + O2 = 11-deoxycortisol + oxidized [NADPH--hemoprotein reductase] + H2O + H(+). A cytochrome P450 monooxygenase that plays a major role in adrenal steroidogenesis. Catalyzes the hydroxylation at C-21 of progesterone and 17alpha-hydroxyprogesterone to respectively form 11-deoxycorticosterone and 11-deoxycortisol, intermediate metabolites in the biosynthetic pathway of mineralocorticoids and glucocorticoids. Mechanistically, uses molecular oxygen inserting one oxygen atom into a substrate, and reducing the second into a water molecule, with two electrons provided by NADPH via cytochrome P450 reductase (CPR; NADPH-ferrihemoprotein reductase). The polypeptide is Steroid 21-hydroxylase (Cyp21) (Mus musculus (Mouse)).